The sequence spans 312 residues: Olfactory receptor 2C1 (312 aa).

Topologically, residues 1–24 (MEVDSNSSSGSFILMGVSDHPHLE) are extracellular. Residue Asn-6 is glycosylated (N-linked (GlcNAc...) asparagine). Residues 25-48 (IIFFAVILASYLLTLVGNLTIILL) form a helical membrane-spanning segment. The Cytoplasmic portion of the chain corresponds to 49 to 57 (SRLDARLHT). A helical membrane pass occupies residues 58–79 (PMYFFLSNLSSLDLAFTTSSVP). At 80–100 (QMLKNLWGPDKTISYGGCVTQ) the chain is on the extracellular side. Residues Cys-97 and Cys-189 are joined by a disulfide bond. The helical transmembrane segment at 101 to 120 (LYVFLWLGATECILLVVMAF) threads the bilayer. Residues 121–139 (DRYVAVCRPLHYMTVMNPR) are Cytoplasmic-facing. The chain crosses the membrane as a helical span at residues 140–160 (LCWGLAAISWLGGLGNSVIQS). At 161-200 (TFTLQLPFCGHRKVDNFLCEVPAMIKLACGDTSLNEAVLN) the chain is on the extracellular side. The helical transmembrane segment at 201–222 (GVCTFFTVVPVSVILVSYCFIA) threads the bilayer. The Cytoplasmic segment spans residues 223-236 (QAVMKIRSVEGRRK). A helical membrane pass occupies residues 237-261 (AFNTCVSHLVVVFLFYGSAIYGYLL). Residues 262 to 272 (PAKSSNQSQGK) lie on the Extracellular side of the membrane. The chain crosses the membrane as a helical span at residues 273 to 292 (FISLFYSVVTPMVNPLIYTL). At 293–312 (RNKEVKGALGRLLGKGRGAS) the chain is on the cytoplasmic side.

The protein belongs to the G-protein coupled receptor 1 family. In terms of tissue distribution, olfactory epithelium. Present in various subcellular compartments of the olfactory sensory neurons, particularly in the axonal processes and neve terminals.

It localises to the cell membrane. Functionally, olfactory receptor that is activated by the binding of organosulfur odorants with thioether groups such as (methylthio)methanetiol (MTMT). Also binds odorants acetophenone and benzaldehyde. The activity of this receptor is mediated by G proteins which activate adenylyl cyclase. May be involved in the molecular processes underlying fasciculation and targeting of olfactory axons. This Mus musculus (Mouse) protein is Olfactory receptor 2C1.